The sequence spans 174 residues: Large ribosomal subunit protein uL18 (174 aa).

It belongs to the universal ribosomal protein uL18 family. Part of the 50S ribosomal subunit. Contacts the 5S and 23S rRNAs.

Functionally, this is one of the proteins that bind and probably mediate the attachment of the 5S RNA into the large ribosomal subunit, where it forms part of the central protuberance. The chain is Large ribosomal subunit protein uL18 from Methanosarcina mazei (strain ATCC BAA-159 / DSM 3647 / Goe1 / Go1 / JCM 11833 / OCM 88) (Methanosarcina frisia).